Reading from the N-terminus, the 317-residue chain is Acetyl-coenzyme A carboxylase carboxyl transferase subunit alpha (317 aa).

Residues 33–294 enclose the CoA carboxyltransferase C-terminal domain; the sequence is NLDDEIARLQ…KQRLLDDLKE (262 aa).

The protein belongs to the AccA family. In terms of assembly, acetyl-CoA carboxylase is a heterohexamer composed of biotin carboxyl carrier protein (AccB), biotin carboxylase (AccC) and two subunits each of ACCase subunit alpha (AccA) and ACCase subunit beta (AccD).

Its subcellular location is the cytoplasm. The enzyme catalyses N(6)-carboxybiotinyl-L-lysyl-[protein] + acetyl-CoA = N(6)-biotinyl-L-lysyl-[protein] + malonyl-CoA. Its pathway is lipid metabolism; malonyl-CoA biosynthesis; malonyl-CoA from acetyl-CoA: step 1/1. In terms of biological role, component of the acetyl coenzyme A carboxylase (ACC) complex. First, biotin carboxylase catalyzes the carboxylation of biotin on its carrier protein (BCCP) and then the CO(2) group is transferred by the carboxyltransferase to acetyl-CoA to form malonyl-CoA. In Pasteurella multocida (strain Pm70), this protein is Acetyl-coenzyme A carboxylase carboxyl transferase subunit alpha.